We begin with the raw amino-acid sequence, 374 residues long: Nuclear hormone receptor family member nhr-57 (374 aa).

Residues 7-84 (RKYCSVCHQL…VGMNPEVVQA (78 aa)) constitute a DNA-binding region (nuclear receptor). NR C4-type zinc fingers lie at residues 10 to 30 (CSVC…CKAC) and 48 to 67 (CRKK…CKSC). The NR LBD domain occupies 124–374 (QMTPTLCGVM…DKIYKIIDGQ (251 aa)).

It belongs to the nuclear hormone receptor family.

The protein localises to the nucleus. Orphan nuclear receptor. The polypeptide is Nuclear hormone receptor family member nhr-57 (nhr-57) (Caenorhabditis elegans).